The sequence spans 518 residues: Protein nucleotidyltransferase YdiU (518 aa).

The segment covering 1–10 (MTHLQFDNRL) has biased composition (basic and acidic residues). Positions 1 to 23 (MTHLQFDNRLRAQLPGDPEQGPR) are disordered. The ATP site is built by Gly-100, Gly-102, Arg-103, Lys-123, Asp-135, Gly-136, Arg-193, and Arg-200. Asp-270 (proton acceptor) is an active-site residue. Residues Asn-271 and Asp-280 each contribute to the Mg(2+) site. Residue Asp-280 participates in ATP binding.

Belongs to the SELO family. It depends on Mg(2+) as a cofactor. Mn(2+) is required as a cofactor.

It catalyses the reaction L-seryl-[protein] + ATP = 3-O-(5'-adenylyl)-L-seryl-[protein] + diphosphate. The enzyme catalyses L-threonyl-[protein] + ATP = 3-O-(5'-adenylyl)-L-threonyl-[protein] + diphosphate. It carries out the reaction L-tyrosyl-[protein] + ATP = O-(5'-adenylyl)-L-tyrosyl-[protein] + diphosphate. The catalysed reaction is L-histidyl-[protein] + UTP = N(tele)-(5'-uridylyl)-L-histidyl-[protein] + diphosphate. It catalyses the reaction L-seryl-[protein] + UTP = O-(5'-uridylyl)-L-seryl-[protein] + diphosphate. The enzyme catalyses L-tyrosyl-[protein] + UTP = O-(5'-uridylyl)-L-tyrosyl-[protein] + diphosphate. In terms of biological role, nucleotidyltransferase involved in the post-translational modification of proteins. It can catalyze the addition of adenosine monophosphate (AMP) or uridine monophosphate (UMP) to a protein, resulting in modifications known as AMPylation and UMPylation. In Xanthomonas campestris pv. campestris (strain B100), this protein is Protein nucleotidyltransferase YdiU.